The sequence spans 192 residues: GTP cyclohydrolase-2 (192 aa).

50–54 (RLHSE) is a GTP binding site. Cys55, Cys66, and Cys68 together coordinate Zn(2+). Residues 92–94 (EGR) and Thr114 contribute to the GTP site. The active-site Proton acceptor is Asp126. The active-site Nucleophile is the Arg128. Residues Thr149 and Lys154 each contribute to the GTP site.

The protein belongs to the GTP cyclohydrolase II family. Zn(2+) is required as a cofactor.

The enzyme catalyses GTP + 4 H2O = 2,5-diamino-6-hydroxy-4-(5-phosphoribosylamino)-pyrimidine + formate + 2 phosphate + 3 H(+). The protein operates within cofactor biosynthesis; riboflavin biosynthesis; 5-amino-6-(D-ribitylamino)uracil from GTP: step 1/4. Functionally, catalyzes the conversion of GTP to 2,5-diamino-6-ribosylamino-4(3H)-pyrimidinone 5'-phosphate (DARP), formate and pyrophosphate. The polypeptide is GTP cyclohydrolase-2 (Helicobacter pylori (strain Shi470)).